The sequence spans 302 residues: Ornithine carbamoyltransferase (302 aa).

Residues 52 to 55, Gln79, Arg103, and 130 to 133 each bind carbamoyl phosphate; these read STRT and HPCQ. Residues Asn161, Asp221, and 225 to 226 contribute to the L-ornithine site; that span reads SM. Carbamoyl phosphate contacts are provided by residues 261 to 262 and Arg289; that span reads CL.

The protein belongs to the aspartate/ornithine carbamoyltransferase superfamily. OTCase family.

The protein resides in the cytoplasm. It carries out the reaction carbamoyl phosphate + L-ornithine = L-citrulline + phosphate + H(+). The protein operates within amino-acid biosynthesis; L-arginine biosynthesis; L-arginine from L-ornithine and carbamoyl phosphate: step 1/3. Its function is as follows. Reversibly catalyzes the transfer of the carbamoyl group from carbamoyl phosphate (CP) to the N(epsilon) atom of ornithine (ORN) to produce L-citrulline. The sequence is that of Ornithine carbamoyltransferase from Methanosarcina acetivorans (strain ATCC 35395 / DSM 2834 / JCM 12185 / C2A).